The primary structure comprises 166 residues: Large ribosomal subunit protein uL10 (166 aa).

Belongs to the universal ribosomal protein uL10 family. As to quaternary structure, part of the ribosomal stalk of the 50S ribosomal subunit. The N-terminus interacts with L11 and the large rRNA to form the base of the stalk. The C-terminus forms an elongated spine to which L12 dimers bind in a sequential fashion forming a multimeric L10(L12)X complex.

Its function is as follows. Forms part of the ribosomal stalk, playing a central role in the interaction of the ribosome with GTP-bound translation factors. This chain is Large ribosomal subunit protein uL10, found in Pseudomonas fluorescens (strain SBW25).